The sequence spans 121 residues: Small ribosomal subunit protein uS13 (121 aa).

The tract at residues V97 to K121 is disordered. The span at Q100 to K121 shows a compositional bias: basic residues.

Belongs to the universal ribosomal protein uS13 family. Part of the 30S ribosomal subunit. Forms a loose heterodimer with protein S19. Forms two bridges to the 50S subunit in the 70S ribosome.

Its function is as follows. Located at the top of the head of the 30S subunit, it contacts several helices of the 16S rRNA. In the 70S ribosome it contacts the 23S rRNA (bridge B1a) and protein L5 of the 50S subunit (bridge B1b), connecting the 2 subunits; these bridges are implicated in subunit movement. Contacts the tRNAs in the A and P-sites. This Prochlorococcus marinus (strain NATL2A) protein is Small ribosomal subunit protein uS13.